Here is a 315-residue protein sequence, read N- to C-terminus: Methionyl-tRNA formyltransferase (315 aa).

Ser-112–Pro-115 contributes to the (6S)-5,6,7,8-tetrahydrofolate binding site.

It belongs to the Fmt family.

It carries out the reaction L-methionyl-tRNA(fMet) + (6R)-10-formyltetrahydrofolate = N-formyl-L-methionyl-tRNA(fMet) + (6S)-5,6,7,8-tetrahydrofolate + H(+). Its function is as follows. Attaches a formyl group to the free amino group of methionyl-tRNA(fMet). The formyl group appears to play a dual role in the initiator identity of N-formylmethionyl-tRNA by promoting its recognition by IF2 and preventing the misappropriation of this tRNA by the elongation apparatus. The protein is Methionyl-tRNA formyltransferase of Leptospira borgpetersenii serovar Hardjo-bovis (strain JB197).